Reading from the N-terminus, the 150-residue chain is MARISLASSSAGVAGKPRGGGGLHPLGQTRKTLPGERRDTTQKITKPRYKPGQKALKEIRRYQRGTELLIAKLPFARVVREVALNYLGSEYGNLQWQSMALLALQEAAEAFLVHLFEDVNLCAIHAKRVTIMQKDMQLARRIRGAWGGAG.

Residues 1-11 (MARISLASSSA) show a composition bias toward polar residues. The disordered stretch occupies residues 1 to 50 (MARISLASSSAGVAGKPRGGGGLHPLGQTRKTLPGERRDTTQKITKPRYK). Positions 32–145 (TLPGERRDTT…MQLARRIRGA (114 aa)) are H3-like.

The protein belongs to the histone H3 family. As to quaternary structure, component of centromeric nucleosomes, where DNA is wrapped around a histone octamer core. The octamer contains two molecules each of H2A, H2B, CSE4/CENPA and H4 assembled in one CSE4-H4 heterotetramer and two H2A-H2B heterodimers. Interacts with the inner kinetochore. Ubiquitinated. Is degraded through ubiquitin-mediated proteolysis when not protected by its association to the kinetochore.

Its subcellular location is the nucleus. The protein resides in the chromosome. It is found in the centromere. In terms of biological role, histone H3-like nucleosomal protein that is specifically found in centromeric nucleosomes. Replaces conventional H3 in the nucleosome core of centromeric chromatin that serves as an assembly site for the inner kinetochore. Required for recruitment and assembly of kinetochore proteins, mitotic progression and chromosome segregation. May serve as an epigenetic mark that propagates centromere identity through replication and cell division. The chain is Histone H3-like centromeric protein CSE4 (CSE4) from Yarrowia lipolytica (strain CLIB 122 / E 150) (Yeast).